The sequence spans 124 residues: Urocortin (124 aa).

Positions 1–25 are cleaved as a signal peptide; sequence MRQAGRAALLAALLLLVQLCPGSSQ. The segment at 23-46 is disordered; the sequence is SSQRSPEAAGVQDPSLRWSPGARN. Positions 26 to 82 are excised as a propeptide; that stretch reads RSPEAAGVQDPSLRWSPGARNQGGGARALLLLLAERFPRRAGPGRLGLGTAGERPRR. Position 122 is a valine amide (Val-122).

Belongs to the sauvagine/corticotropin-releasing factor/urotensin I family. Interacts with CRHR1 and CRHR2 (via their N-terminal extracellular domain). As to expression, keratinocytes in epidermis and the outer and inner root sheaths of hair follicles, epithelium of sebaceous and sweat glands, erector pili muscle, cutaneous blood vessel walls, cutaneous nerves and dermal mononuclear cells. Detected in plasma cells in the lamia propria in colon mucosa (at protein level). Expressed in pituitary and adrenal glands. Detected in plasma cells in the lamia propria in colon mucosa.

Its subcellular location is the secreted. Its function is as follows. Acts in vitro to stimulate the secretion of adrenocorticotropic hormone (ACTH). Binds with high affinity to CRF receptor types 1, 2-alpha, and 2-beta. Plays a role in the establishment of normal hearing thresholds. Reduces food intake and regulates ghrelin levels in gastric body and plasma. This Homo sapiens (Human) protein is Urocortin (UCN).